We begin with the raw amino-acid sequence, 173 residues long: MPSSNNKDNFLDKAFTVIAEGIVKMMPIAAKEKQAYIYYREGFAAQNNGDYSEALENYEESLKLEENPVDRGETLKNMAIIYMSNGDEDRALETYVKALDQNPKQPSCLKNMGLIYEKRGRSAQQRGLQDESDIWFDKAADVWTKAVRLYPGGYLDIENWLKTTGRSKIDVYL.

TPR repeat units follow at residues A35–P68, G72–Q105, and G120–G153.

The protein belongs to the Ycf3 family.

The protein resides in the cellular thylakoid membrane. Its function is as follows. Essential for the assembly of the photosystem I (PSI) complex. May act as a chaperone-like factor to guide the assembly of the PSI subunits. The chain is Photosystem I assembly protein Ycf3 from Prochlorococcus marinus (strain MIT 9211).